Consider the following 193-residue polypeptide: Large ribosomal subunit protein uL11 (193 aa).

The protein belongs to the universal ribosomal protein uL11 family. In terms of assembly, part of the ribosomal stalk of the 50S ribosomal subunit. Interacts with L10 and the large rRNA to form the base of the stalk. L10 forms an elongated spine to which L12 dimers bind in a sequential fashion forming a multimeric L10(L12)X complex. In terms of processing, one or more lysine residues are methylated.

Functionally, forms part of the ribosomal stalk which helps the ribosome interact with GTP-bound translation factors. This chain is Large ribosomal subunit protein uL11, found in Mycoplasmopsis synoviae (strain 53) (Mycoplasma synoviae).